The following is a 550-amino-acid chain: Probable terpene synthase 2 (550 aa).

3 residues coordinate Mg(2+): aspartate 305, aspartate 309, and glutamate 457. The DDXXD motif motif lies at 305–309; the sequence is DDIYD.

It belongs to the terpene synthase family. The cofactor is Mg(2+).

Functionally, probable sesquiterpene synthase. The protein is Probable terpene synthase 2 (TPS2) of Ricinus communis (Castor bean).